The sequence spans 244 residues: 7-cyano-7-deazaguanine synthase (244 aa).

14-24 serves as a coordination point for ATP; sequence FSGGQDSATCV. 4 residues coordinate Zn(2+): Cys202, Cys217, Cys220, and Cys223.

It belongs to the QueC family. The cofactor is Zn(2+).

It carries out the reaction 7-carboxy-7-deazaguanine + NH4(+) + ATP = 7-cyano-7-deazaguanine + ADP + phosphate + H2O + H(+). It participates in purine metabolism; 7-cyano-7-deazaguanine biosynthesis. Catalyzes the ATP-dependent conversion of 7-carboxy-7-deazaguanine (CDG) to 7-cyano-7-deazaguanine (preQ(0)). In Burkholderia lata (strain ATCC 17760 / DSM 23089 / LMG 22485 / NCIMB 9086 / R18194 / 383), this protein is 7-cyano-7-deazaguanine synthase.